Reading from the N-terminus, the 547-residue chain is Chaperonin GroEL (547 aa).

Residues 30-33 (TLGP), lysine 51, 87-91 (DGTTT), glycine 415, and aspartate 496 each bind ATP. The disordered stretch occupies residues 528–547 (DKSDMPAMPPGGMGGMGGMY). The segment covering 538-547 (GGMGGMGGMY) has biased composition (gly residues).

The protein belongs to the chaperonin (HSP60) family. As to quaternary structure, forms a cylinder of 14 subunits composed of two heptameric rings stacked back-to-back. Interacts with the co-chaperonin GroES.

It localises to the cytoplasm. The catalysed reaction is ATP + H2O + a folded polypeptide = ADP + phosphate + an unfolded polypeptide.. Functionally, together with its co-chaperonin GroES, plays an essential role in assisting protein folding. The GroEL-GroES system forms a nano-cage that allows encapsulation of the non-native substrate proteins and provides a physical environment optimized to promote and accelerate protein folding. This chain is Chaperonin GroEL, found in Chlorobium luteolum (strain DSM 273 / BCRC 81028 / 2530) (Pelodictyon luteolum).